Consider the following 73-residue polypeptide: MTTKKTSSVVLPLLLVFALILMPMVAGQLKSTCRIAEAWKGAKECNAKCAALGTTRGGVCQKFLGDLYCCCWD.

An N-terminal signal peptide occupies residues 1–27 (MTTKKTSSVVLPLLLVFALILMPMVAG). 3 disulfide bridges follow: Cys33/Cys71, Cys45/Cys69, and Cys49/Cys70.

It belongs to the DEFL family.

It is found in the secreted. The chain is Defensin-like protein 87 from Arabidopsis thaliana (Mouse-ear cress).